The primary structure comprises 159 residues: Globin D, coelomic (159 aa).

N-acetylglycine is present on Gly-2. Residues 12-158 enclose the Globin domain; the sequence is DLTPAEKDLI…VQGVLITKHA (147 aa). Residues His-74 and His-105 each coordinate heme b.

The protein belongs to the globin family. As to quaternary structure, homodimer.

The protein is Globin D, coelomic of Molpadia arenicola (Sea cucumber).